The chain runs to 147 residues: Hemoglobin subunit beta (147 aa).

Positions 3 to 147 (EWTDKERTII…VVSALGKQYH (145 aa)) constitute a Globin domain. Heme b is bound by residues His64 and His93.

This sequence belongs to the globin family. Heterotetramer of two alpha chains and two beta chains. In terms of tissue distribution, red blood cells.

Its function is as follows. Involved in oxygen transport from gills to the various peripheral tissues. This Trematomus newnesi (Dusky notothen) protein is Hemoglobin subunit beta.